Consider the following 147-residue polypeptide: Nucleoside diphosphate kinase (147 aa).

Residues K9, F57, R85, T91, R102, and N112 each contribute to the ATP site. The active-site Pros-phosphohistidine intermediate is the H115.

Belongs to the NDK family. As to quaternary structure, homotetramer. Mg(2+) is required as a cofactor.

It is found in the cytoplasm. It carries out the reaction a 2'-deoxyribonucleoside 5'-diphosphate + ATP = a 2'-deoxyribonucleoside 5'-triphosphate + ADP. The enzyme catalyses a ribonucleoside 5'-diphosphate + ATP = a ribonucleoside 5'-triphosphate + ADP. In terms of biological role, major role in the synthesis of nucleoside triphosphates other than ATP. The ATP gamma phosphate is transferred to the NDP beta phosphate via a ping-pong mechanism, using a phosphorylated active-site intermediate. The protein is Nucleoside diphosphate kinase of Listeria monocytogenes serotype 4a (strain HCC23).